The primary structure comprises 249 residues: NAD kinase (249 aa).

Asp-45 serves as the catalytic Proton acceptor. NAD(+)-binding positions include 45–46 (DG), Arg-50, 110–111 (NE), Asp-138, and 149–154 (SGWGMS).

This sequence belongs to the NAD kinase family. Requires a divalent metal cation as cofactor.

Its subcellular location is the cytoplasm. It carries out the reaction NAD(+) + ATP = ADP + NADP(+) + H(+). Its function is as follows. Involved in the regulation of the intracellular balance of NAD and NADP, and is a key enzyme in the biosynthesis of NADP. Catalyzes specifically the phosphorylation on 2'-hydroxyl of the adenosine moiety of NAD to yield NADP. The protein is NAD kinase of Saccharolobus solfataricus (strain ATCC 35092 / DSM 1617 / JCM 11322 / P2) (Sulfolobus solfataricus).